The primary structure comprises 639 residues: Kinesin-like protein KIF22 (639 aa).

Positions 18 to 345 (RVRVAVRLRP…LNFAAKSKQI (328 aa)) constitute a Kinesin motor domain. Residue 102 to 109 (GPTGAGKT) participates in ATP binding. The interval 358-400 (IAALPAMKRPREEAETAAGSRQRKKSKTDSTESSPNTSMDAAS) is disordered. The segment covering 388-397 (TESSPNTSMD) has biased composition (polar residues). A coiled-coil region spans residues 439–484 (KRERMALLKKWEESQMEIERLKEKQKELEQKAIEAEARLEKSTNSD). Residues 549–552 (GREN) carry the Important for regulated proteolytic degradation motif.

The protein belongs to the TRAFAC class myosin-kinesin ATPase superfamily. Kinesin family. Post-translationally, ubiquitinated, leading to its subsequent proteasomal degradation.

The protein localises to the nucleus. It is found in the cytoplasm. The protein resides in the cytoskeleton. Its function is as follows. Kinesin family member that is involved in spindle formation and the movements of chromosomes during mitosis and meiosis. Binds to microtubules and to DNA. In Xenopus tropicalis (Western clawed frog), this protein is Kinesin-like protein KIF22 (kif22).